Consider the following 334-residue polypeptide: GTPase Obg (334 aa).

An Obg domain is found at 1-159; sequence MKFVDSASVR…REIGLELSVM (159 aa). One can recognise an OBG-type G domain in the interval 160–332; the sequence is ADIGLLGIPN…LVAGLFKLVL (173 aa). Residues 166-173, 191-195, 212-215, 282-285, and 313-315 contribute to the GTP site; these read GIPNAGKS, FTTLH, DIPG, NKID, and SAL. Residues S173 and T193 each coordinate Mg(2+).

The protein belongs to the TRAFAC class OBG-HflX-like GTPase superfamily. OBG GTPase family. In terms of assembly, monomer. It depends on Mg(2+) as a cofactor.

The protein resides in the cytoplasm. An essential GTPase which binds GTP, GDP and possibly (p)ppGpp with moderate affinity, with high nucleotide exchange rates and a fairly low GTP hydrolysis rate. Plays a role in control of the cell cycle, stress response, ribosome biogenesis and in those bacteria that undergo differentiation, in morphogenesis control. This chain is GTPase Obg, found in Vesicomyosocius okutanii subsp. Calyptogena okutanii (strain HA).